The following is a 128-amino-acid chain: Pi-hexatoxin-Hi1c (128 aa).

The first 19 residues, Met1 to Gly19, serve as a signal peptide directing secretion. A propeptide spanning residues Asp20–Arg47 is cleaved from the precursor. 6 cysteine pairs are disulfide-bonded: Cys54-Cys69, Cys61-Cys74, Cys68-Cys84, Cys93-Cys108, Cys100-Cys113, and Cys107-Cys124. Domain repeat units lie at residues Cys54–Cys84 and Cys93–Cys124. Residues Cys54 to Cys124 are 2 X approximate repeats with cysteine pattern C-C-CC-C-C.

The protein belongs to the psalmotoxin-1 family. Double-knot toxin subfamily. Expressed by the venom gland.

The protein localises to the secreted. In terms of biological role, this toxin potently and selectively inhibits ASIC1a, an isoform of the gene ASIC1. It incompletely inhibits ASIC1a activation in a pH-independent and slowly reversible manner. This toxin acts by binding to and stabilizing the closed state of the channel, thereby impeding the transition into a conducting state. This toxin may bind to the acidic pocket of ASIC1a, since mutation of a key residue of this pocket (Arg-350) abolishes the ability of the toxin to inhibit ASIC1a. In vivo, this toxin protects the brain from neuronal injury when administered up to 8 hours after stroke onset. This is Pi-hexatoxin-Hi1c from Hadronyche infensa (Fraser island funnel-web spider).